The sequence spans 263 residues: uncharacterized protein (263 aa).

The GST N-terminal domain maps to 44–131 (QVYSLGTPNG…YLADKFNHLI (88 aa)). The 130-residue stretch at 134–263 (DWAQRTEVLN…ALEVDYKAIK (130 aa)) folds into the GST C-terminal domain.

It belongs to the GST superfamily. Homodimer.

This is an uncharacterized protein from Streptococcus mutans serotype c (strain ATCC 700610 / UA159).